Consider the following 458-residue polypeptide: Vitamin K-dependent protein C (458 aa).

A signal peptide spans 1 to 27; sequence IPDDVGYRNQKTASKEGVCVVSKCQDG. A propeptide spanning residues 28–36 is cleaved from the precursor; sequence PNTLPRAKR. The Gla domain occupies 37 to 82; that stretch reads ANSFLEELRPSSLERECVEEVCDLEEAKEIFQSVDDTLAFWYKYVD. 4-carboxyglutamate is present on residues E42, E43, E50, E52, E55, E56, E61, E62, and E65. The cysteines at positions 53 and 58 are disulfide-linked. Intrachain disulfides connect C86/C105, C95/C100, C99/C114, and C116/C125. 2 EGF-like domains span residues 91–126 and 130–170; these read SEHP…SFCQ and RFSN…LQCE. A (3R)-3-hydroxyaspartate modification is found at D107. N-linked (GlcNAc...) asparagine glycosylation occurs at N133. 5 cysteine pairs are disulfide-bonded: C134-C145, C141-C154, C156-C169, C177-C316, and C235-C251. The Peptidase S1 domain maps to 210 to 447; sequence IDGKLTRRGD…YLDWIHSHIE (238 aa). H250 functions as the Charge relay system in the catalytic mechanism. N-linked (GlcNAc...) asparagine glycosylation is present at N287. The active-site Charge relay system is the D296. N-linked (GlcNAc...) asparagine glycosylation is present at N352. 2 disulfides stabilise this stretch: C370–C384 and C395–C423. The Charge relay system role is filled by S399.

Belongs to the peptidase S1 family. Synthesized as a single chain precursor, which is cleaved into a light chain and a heavy chain held together by a disulfide bond. The enzyme is then activated by thrombin, which cleaves a tetradecapeptide from the amino end of the heavy chain; this reaction, which occurs at the surface of endothelial cells, is strongly promoted by thrombomodulin. In terms of processing, the vitamin K-dependent, enzymatic carboxylation of some Glu residues allows the modified protein to bind calcium. Post-translationally, the iron and 2-oxoglutarate dependent 3-hydroxylation of aspartate and asparagine is (R) stereospecific within EGF domains. As to expression, plasma; synthesized in the liver.

It localises to the secreted. It is found in the golgi apparatus. The protein resides in the endoplasmic reticulum. The enzyme catalyses Degradation of blood coagulation factors Va and VIIIa.. In terms of biological role, protein C is a vitamin K-dependent serine protease that regulates blood coagulation by inactivating factors Va and VIIIa in the presence of calcium ions and phospholipids. Exerts a protective effect on the endothelial cell barrier function. This chain is Vitamin K-dependent protein C (PROC), found in Oryctolagus cuniculus (Rabbit).